Reading from the N-terminus, the 266-residue chain is Shikimate dehydrogenase (NADP(+)) (266 aa).

Residues 16–18 (SKS) and T65 contribute to the shikimate site. K69 acts as the Proton acceptor in catalysis. Positions 90 and 105 each coordinate shikimate. NADP(+) is bound by residues 128 to 132 (GAGGS) and L211. Position 213 (Y213) interacts with shikimate. G233 is an NADP(+) binding site.

This sequence belongs to the shikimate dehydrogenase family. In terms of assembly, homodimer.

The catalysed reaction is shikimate + NADP(+) = 3-dehydroshikimate + NADPH + H(+). It participates in metabolic intermediate biosynthesis; chorismate biosynthesis; chorismate from D-erythrose 4-phosphate and phosphoenolpyruvate: step 4/7. In terms of biological role, involved in the biosynthesis of the chorismate, which leads to the biosynthesis of aromatic amino acids. Catalyzes the reversible NADPH linked reduction of 3-dehydroshikimate (DHSA) to yield shikimate (SA). The chain is Shikimate dehydrogenase (NADP(+)) from Helicobacter pylori (strain J99 / ATCC 700824) (Campylobacter pylori J99).